The primary structure comprises 88 residues: Homeobox protein knotted-1-like 1 (88 aa).

The 21-residue stretch at 4-24 folds into the ELK domain; that stretch reads ELKLELKQGFKSRIEDVREEI. The homeobox; TALE-type DNA-binding region spans 25-88; it reads LRKRRAGKLP…NQRKRNWHNN (64 aa).

It belongs to the TALE/KNOX homeobox family. In terms of tissue distribution, highly expressed in the roots.

It is found in the nucleus. The polypeptide is Homeobox protein knotted-1-like 1 (KNOX1) (Zea mays (Maize)).